Here is a 286-residue protein sequence, read N- to C-terminus: MKNSGLLNSVHVPAADPYYYLNTETLSLLNRIQRISQKHPVNVLVIGKQGCGKSSLVRQYAAVHHLPLATFQIGLLSEPGQLFGEYALENGETRYKQFLFPQAIQTPGCVIHLEEINRPEHPKALNMLFSILSDDRQVWMDELGLLKVADGVVFFATLNEGDEFVGTELLDPALRDRFYVTAMDFLPNDVEREVLQKKTGVTIAQAEEIIGVVNSLRASPELGVEVSTRKTLMIGEMIAAGGSLREAIAASLQTDRETLESVLLSLHVELGKTERGTTEYVLFTPR.

Residues 47-54 (GKQGCGKS) and 108-115 (GCVIHLEE) contribute to the ATP site.

This sequence belongs to the CbbQ/NirQ/NorQ/GpvN family.

Its function is as follows. May have a role in assembly and/or activation of benzylsuccinate synthase. This chain is Putative chaperone BssE (bssE), found in Thauera aromatica.